Here is a 150-residue protein sequence, read N- to C-terminus: Protein E6 (150 aa).

2 zinc fingers span residues 31-67 (CVFC…CACC) and 104-140 (CYLC…CFHC).

This sequence belongs to the papillomaviridae E6 protein family. In terms of assembly, forms homodimers. Interacts with ubiquitin-protein ligase UBE3A/E6-AP; this interaction stimulates UBE3A ubiquitin activity. Interacts with host TP53 and EP300; this interaction inhibits TP53 activity.

It localises to the host cytoplasm. The protein localises to the host nucleus. Functionally, plays a major role in the induction and maintenance of cellular transformation. E6 associates with host UBE3A/E6-AP ubiquitin-protein ligase and modulates its activity. Sequesters tumor suppressor TP53 in the host cytoplasm and modulates its activity by interacting with host EP300 that results in the reduction of TP53 acetylation and activation. In turn, apoptosis induced by DNA damage is inhibited. E6 also protects host keratinocytes from apoptosis by mediating the degradation of host BAK1. May also inhibit host immune response. The chain is Protein E6 from Human papillomavirus 13.